A 264-amino-acid polypeptide reads, in one-letter code: Formamidopyrimidine-DNA glycosylase (264 aa).

Catalysis depends on proline 2, which acts as the Schiff-base intermediate with DNA. The active-site Proton donor is the glutamate 3. Lysine 58 acts as the Proton donor; for beta-elimination activity in catalysis. Histidine 89, arginine 107, and arginine 144 together coordinate DNA. The FPG-type zinc finger occupies 229–263 (RVYQRTGEPCLNCKTPIRRVIVTQRSSHFCPHCQK). Catalysis depends on arginine 253, which acts as the Proton donor; for delta-elimination activity.

This sequence belongs to the FPG family. As to quaternary structure, monomer. The cofactor is Zn(2+).

It carries out the reaction Hydrolysis of DNA containing ring-opened 7-methylguanine residues, releasing 2,6-diamino-4-hydroxy-5-(N-methyl)formamidopyrimidine.. The catalysed reaction is 2'-deoxyribonucleotide-(2'-deoxyribose 5'-phosphate)-2'-deoxyribonucleotide-DNA = a 3'-end 2'-deoxyribonucleotide-(2,3-dehydro-2,3-deoxyribose 5'-phosphate)-DNA + a 5'-end 5'-phospho-2'-deoxyribonucleoside-DNA + H(+). Its function is as follows. Involved in base excision repair of DNA damaged by oxidation or by mutagenic agents. Acts as a DNA glycosylase that recognizes and removes damaged bases. Has a preference for oxidized purines, such as 7,8-dihydro-8-oxoguanine (8-oxoG). Has AP (apurinic/apyrimidinic) lyase activity and introduces nicks in the DNA strand. Cleaves the DNA backbone by beta-delta elimination to generate a single-strand break at the site of the removed base with both 3'- and 5'-phosphates. The polypeptide is Formamidopyrimidine-DNA glycosylase (Solibacter usitatus (strain Ellin6076)).